A 253-amino-acid polypeptide reads, in one-letter code: Solute carrier family 66 member 2 (253 aa).

The next 6 membrane-spanning stretches (helical) occupy residues glycine 7–phenylalanine 27, phenylalanine 49–phenylalanine 69, histidine 72–leucine 92, phenylalanine 125–leucine 145, alanine 150–proline 170, and valine 214–threonine 234. In terms of domain architecture, PQ-loop 1 spans histidine 14–glutamine 80. The PQ-loop 2 domain occupies alanine 160–cysteine 215.

The protein resides in the membrane. The polypeptide is Solute carrier family 66 member 2 (SLC66A2) (Bos taurus (Bovine)).